We begin with the raw amino-acid sequence, 261 residues long: Imidazole glycerol phosphate synthase subunit HisF (261 aa).

Active-site residues include Asp-11 and Asp-130.

This sequence belongs to the HisA/HisF family. As to quaternary structure, heterodimer of HisH and HisF.

Its subcellular location is the cytoplasm. It catalyses the reaction 5-[(5-phospho-1-deoxy-D-ribulos-1-ylimino)methylamino]-1-(5-phospho-beta-D-ribosyl)imidazole-4-carboxamide + L-glutamine = D-erythro-1-(imidazol-4-yl)glycerol 3-phosphate + 5-amino-1-(5-phospho-beta-D-ribosyl)imidazole-4-carboxamide + L-glutamate + H(+). It functions in the pathway amino-acid biosynthesis; L-histidine biosynthesis; L-histidine from 5-phospho-alpha-D-ribose 1-diphosphate: step 5/9. Its function is as follows. IGPS catalyzes the conversion of PRFAR and glutamine to IGP, AICAR and glutamate. The HisF subunit catalyzes the cyclization activity that produces IGP and AICAR from PRFAR using the ammonia provided by the HisH subunit. The sequence is that of Imidazole glycerol phosphate synthase subunit HisF from Limosilactobacillus fermentum (strain NBRC 3956 / LMG 18251) (Lactobacillus fermentum).